The chain runs to 456 residues: MALWGGRFSQESSALFKLFNDSLPVDYRLVEQDIVGSIAWAAAITQVGILSQDECEKLQQALKELLSEVEGNPELILASGAEDIHSFVEQSLIAKVGDLGKKLHTGRSRNDQVATDLKLWCKKEGQQQLVLLAKLREALLALAERELDAVMPGYTHLQRAQPVAFGHWCLAYVEMFERDISRLEDALKRADTCPLGTGALAGTAYPMDRYKLAESLGFASPTLNSLDTVSDRDHVVEICSDASISMMHLSRMAEDLIFFNSGEAGFIDLDDEVTSGSSLMPQKKNPDALELIRGKTGRVYGSLIGILTTMKALPLAYNKDMQEDKEGLFDVMDSWSICLEMAALVLSGLKVNRENTLKAAQQGYANSTELADYLVAKGMPFREAHHVVGEVVVHAISEQKPLEDFALEQLQSFASIIEQDVYDCLTIESCLAKREALGGTALPQVQSALAAKKVKK.

This sequence belongs to the lyase 1 family. Argininosuccinate lyase subfamily.

It is found in the cytoplasm. It carries out the reaction 2-(N(omega)-L-arginino)succinate = fumarate + L-arginine. It functions in the pathway amino-acid biosynthesis; L-arginine biosynthesis; L-arginine from L-ornithine and carbamoyl phosphate: step 3/3. In Shewanella woodyi (strain ATCC 51908 / MS32), this protein is Argininosuccinate lyase.